Here is a 377-residue protein sequence, read N- to C-terminus: 1,3,6,8-tetrahydroxynaphthalene synthase (377 aa).

The active site involves Cys164.

Belongs to the thiolase-like superfamily. Chalcone/stilbene synthases family. In terms of assembly, homodimer.

It catalyses the reaction 5 malonyl-CoA + 5 H(+) = naphthalene-1,3,6,8-tetrol + 5 CO2 + 5 CoA + H2O. It participates in pigment biosynthesis; melanin biosynthesis. Functionally, involved in the biosynthesis of melanin but also various secondary metabolites containing a naphthoquinone ring. Catalyzes the iterative condensation of five CoA-linked malonyl units to form a pentaketide intermediate. THNS subsequently catalyzes the dual intramolecular Claisen and aldol condensations of this linear intermediate to produce the fused ring of 1,3,6,8-tetrahydroxynaphthalene (THN). The polypeptide is 1,3,6,8-tetrahydroxynaphthalene synthase (Streptomyces peucetius subsp. caesius).